The chain runs to 137 residues: Small heat shock protein IbpA (137 aa).

The region spanning 28–137 (SQSNGGYPPY…ANKPRRIEIN (110 aa)) is the sHSP domain.

The protein belongs to the small heat shock protein (HSP20) family. In terms of assembly, monomer. Forms homomultimers of about 100-150 subunits at optimal growth temperatures. Conformation changes to monomers at high temperatures or high ionic concentrations.

The protein resides in the cytoplasm. Its function is as follows. Associates with aggregated proteins, together with IbpB, to stabilize and protect them from irreversible denaturation and extensive proteolysis during heat shock and oxidative stress. Aggregated proteins bound to the IbpAB complex are more efficiently refolded and reactivated by the ATP-dependent chaperone systems ClpB and DnaK/DnaJ/GrpE. Its activity is ATP-independent. The chain is Small heat shock protein IbpA from Salmonella choleraesuis (strain SC-B67).